A 104-amino-acid polypeptide reads, in one-letter code: Secretoglobin family 3A member 1 (104 aa).

The N-terminal stretch at 1-20 (MKLAALLGLCVALSCSSAAA) is a signal peptide.

It belongs to the secretoglobin family. UGRP subfamily. As to quaternary structure, homodimer; disulfide-linked. As to expression, highly expressed in lung and prostate. Also found in mammary gland, spleen, pancreas, testis and liver. Detected throughout the airway epithelium in lung, with highest expression in large airways. Found in lung submucosal glands where it localizes to acinar and ductile cells. Not detected in respiratory bronchioles, alveolar ducts or alveolar epithelium. In mammary gland, specifically localizes to luminal epithelial cells.

The protein localises to the secreted. Secreted cytokine-like protein. Inhibits cell growth in vitro. The protein is Secretoglobin family 3A member 1 (SCGB3A1) of Homo sapiens (Human).